The sequence spans 167 residues: 6,7-dimethyl-8-ribityllumazine synthase (167 aa).

Residues Phe-26, 60 to 62 (AFE), and 89 to 91 (AII) contribute to the 5-amino-6-(D-ribitylamino)uracil site. 94 to 95 (ET) serves as a coordination point for (2S)-2-hydroxy-3-oxobutyl phosphate. His-97 functions as the Proton donor in the catalytic mechanism. Residue Phe-122 coordinates 5-amino-6-(D-ribitylamino)uracil. Position 136 (Arg-136) interacts with (2S)-2-hydroxy-3-oxobutyl phosphate.

It belongs to the DMRL synthase family. In terms of assembly, forms an icosahedral capsid composed of 60 subunits, arranged as a dodecamer of pentamers.

It catalyses the reaction (2S)-2-hydroxy-3-oxobutyl phosphate + 5-amino-6-(D-ribitylamino)uracil = 6,7-dimethyl-8-(1-D-ribityl)lumazine + phosphate + 2 H2O + H(+). It participates in cofactor biosynthesis; riboflavin biosynthesis; riboflavin from 2-hydroxy-3-oxobutyl phosphate and 5-amino-6-(D-ribitylamino)uracil: step 1/2. Catalyzes the formation of 6,7-dimethyl-8-ribityllumazine by condensation of 5-amino-6-(D-ribitylamino)uracil with 3,4-dihydroxy-2-butanone 4-phosphate. This is the penultimate step in the biosynthesis of riboflavin. The polypeptide is 6,7-dimethyl-8-ribityllumazine synthase (Ruthia magnifica subsp. Calyptogena magnifica).